The sequence spans 816 residues: Microbial collagenase (816 aa).

Positions 1-27 are cleaved as a signal peptide; sequence MSHIRFFPRHRLALACMLASVSSFSFA. H435 provides a ligand contact to Zn(2+). Residue E436 is part of the active site. H439 is a Zn(2+) binding site.

The protein belongs to the peptidase M9A family. The cofactor is Zn(2+).

It localises to the secreted. The enzyme catalyses Digestion of native collagen in the triple helical region at Xaa-|-Gly bonds. With synthetic peptides, a preference is shown for Gly at P3 and P1', Pro and Ala at P2 and P2', and hydroxyproline, Ala or Arg at P3'.. Possesses gelatinolytic activity. Can cause weak haemolysis on blood agar. This Vibrio parahaemolyticus serotype O3:K6 (strain RIMD 2210633) protein is Microbial collagenase (prt).